Reading from the N-terminus, the 142-residue chain is Large ribosomal subunit protein uL13 (142 aa).

Belongs to the universal ribosomal protein uL13 family. Part of the 50S ribosomal subunit.

In terms of biological role, this protein is one of the early assembly proteins of the 50S ribosomal subunit, although it is not seen to bind rRNA by itself. It is important during the early stages of 50S assembly. The protein is Large ribosomal subunit protein uL13 of Chromobacterium violaceum (strain ATCC 12472 / DSM 30191 / JCM 1249 / CCUG 213 / NBRC 12614 / NCIMB 9131 / NCTC 9757 / MK).